Reading from the N-terminus, the 264-residue chain is Interleukin-33 (264 aa).

The interval Met-1–Ala-67 is homeodomain-like HTH domain. A propeptide spanning residues Met-1–Phe-101 is cleaved from the precursor. The interval Pro-66–Leu-108 is interaction with RELA.

Belongs to the IL-1 family. Highly divergent. In terms of assembly, forms a 1:1:1 heterotrimeric complex with its primary high-affinity receptor IL1RL1 and the coreceptor IL1RAP. Interacts with cargo receptor TMED10; the interaction mediates the translocation from the cytoplasm into the ERGIC (endoplasmic reticulum-Golgi intermediate compartment) and thereby secretion. In terms of processing, the full-length protein can be released from cells and is able to signal via the IL1RL1/ST2 receptor. However, proteolytic processing by CELA1, CSTG/cathepsin G and ELANE/neutrophil elastase produces C-terminal peptides that are more active than the unprocessed full-length protein. May also be proteolytically processed by calpains. Proteolytic cleavage mediated by apoptotic caspases including CASP3 and CASP7 results in IL33 inactivation. In vitro proteolytic cleavage by CASP1 was reported but could not be confirmed in vivo suggesting that IL33 is probably not a direct substrate for that caspase.

The protein localises to the nucleus. It is found in the chromosome. It localises to the cytoplasm. The protein resides in the cytoplasmic vesicle. Its subcellular location is the secretory vesicle. The protein localises to the secreted. In terms of biological role, cytokine that binds to and signals through the IL1RL1/ST2 receptor which in turn activates NF-kappa-B and MAPK signaling pathways in target cells. Involved in the maturation of Th2 cells inducing the secretion of T-helper type 2-associated cytokines. Also involved in activation of mast cells, basophils, eosinophils and natural killer cells. Acts as a chemoattractant for Th2 cells, and may function as an 'alarmin', that amplifies immune responses during tissue injury. Induces rapid UCP2-dependent mitochondrial rewiring that attenuates the generation of reactive oxygen species and preserves the integrity of Krebs cycle required for persistent production of itaconate and subsequent GATA3-dependent differentiation of inflammation-resolving alternatively activated macrophages. Functionally, in quiescent endothelia the uncleaved form is constitutively and abundantly expressed, and acts as a chromatin-associated nuclear factor with transcriptional repressor properties, it may sequester nuclear NF-kappaB/RELA, lowering expression of its targets. This form is rapidely lost upon angiogenic or pro-inflammatory activation. This Rattus norvegicus (Rat) protein is Interleukin-33.